Reading from the N-terminus, the 182-residue chain is MTTIVSVRRNNKVVIAGDGQVSLGNTVMKGNARKVRRLYNNKVLAGFAGGTADAFTLFEKFESKLQMHQGHLTKAAVELAKDWRSDRALRKLEALLAVADETASLIITGNGDVVQPENDLIAIGSGGNFAQAAATALLENTDLDAREIAEKSLNIAGDICVFTNHHHTIEELESTVELPKPE.

The active site involves Thr2. 3 residues coordinate Na(+): Gly157, Cys160, and Thr163.

It belongs to the peptidase T1B family. HslV subfamily. A double ring-shaped homohexamer of HslV is capped on each side by a ring-shaped HslU homohexamer. The assembly of the HslU/HslV complex is dependent on binding of ATP.

Its subcellular location is the cytoplasm. It catalyses the reaction ATP-dependent cleavage of peptide bonds with broad specificity.. Allosterically activated by HslU binding. Protease subunit of a proteasome-like degradation complex believed to be a general protein degrading machinery. The protein is ATP-dependent protease subunit HslV of Vibrio atlanticus (strain LGP32) (Vibrio splendidus (strain Mel32)).